The following is a 136-amino-acid chain: Protein NrdI (136 aa).

The protein belongs to the NrdI family.

Functionally, probably involved in ribonucleotide reductase function. This is Protein NrdI from Salmonella paratyphi A (strain ATCC 9150 / SARB42).